The following is a 584-amino-acid chain: PE-PGRS family protein PE_PGRS11 (584 aa).

Positions 1–92 (MSFVIVARDA…AATSYAVTEV (92 aa)) constitute a PE domain. His-290 (tele-phosphohistidine intermediate) is an active-site residue. Residue Glu-365 is the Proton donor/acceptor of the active site. Residues 384-584 (YLVGPIAWTL…LPIGLPSLIP (201 aa)) form a phosphoglycerate mutase region.

The protein in the N-terminal section; belongs to the mycobacterial PE family. PGRS subfamily. This sequence in the C-terminal section; belongs to the phosphoglycerate mutase family. In terms of assembly, interacts with human TLR2. The cofactor is Mg(2+).

The protein localises to the secreted. The protein resides in the cell wall. Its subcellular location is the cell surface. It carries out the reaction (2R)-2-phosphoglycerate = (2R)-3-phosphoglycerate. Induces maturation and activation of human dendritic cells (DCs), via TLR2-dependent activation of ERK1/2, p38 MAPK, and NF-kappa-B signaling pathways, and enhances the ability of DCs to stimulate CD4(+) T cells. By activating DCs, could potentially contribute to the initiation of innate immune responses during tuberculosis infection and hence regulate the clinical course of tuberculosis. Involved in resistance to oxidative stress, via TLR2-dependent activation of the PI3K-ERK1/2-NF-kappa-B signaling pathway and expression of COX-2 and Bcl2. Also abolishes H(2)O(2)-triggered activation of p38 MAPK. The polypeptide is PE-PGRS family protein PE_PGRS11 (Mycobacterium tuberculosis (strain ATCC 25618 / H37Rv)).